The following is a 466-amino-acid chain: Ribulose bisphosphate carboxylase large chain (466 aa).

Position 4 is an N6,N6,N6-trimethyllysine (Lys-4). Residues Asn-113 and Thr-163 each contribute to the substrate site. Lys-165 functions as the Proton acceptor in the catalytic mechanism. Lys-167 provides a ligand contact to substrate. Mg(2+)-binding residues include Lys-191, Asp-193, and Glu-194. At Lys-191 the chain carries N6-carboxylysine. The Proton acceptor role is filled by His-284. Residues Arg-285, His-317, and Ser-369 each coordinate substrate.

Belongs to the RuBisCO large chain family. Type I subfamily. In terms of assembly, heterohexadecamer of 8 large chains and 8 small chains; disulfide-linked. The disulfide link is formed within the large subunit homodimers. Mg(2+) serves as cofactor. The disulfide bond which can form in the large chain dimeric partners within the hexadecamer appears to be associated with oxidative stress and protein turnover.

The protein resides in the plastid. It is found in the chloroplast. It carries out the reaction 2 (2R)-3-phosphoglycerate + 2 H(+) = D-ribulose 1,5-bisphosphate + CO2 + H2O. The enzyme catalyses D-ribulose 1,5-bisphosphate + O2 = 2-phosphoglycolate + (2R)-3-phosphoglycerate + 2 H(+). In terms of biological role, ruBisCO catalyzes two reactions: the carboxylation of D-ribulose 1,5-bisphosphate, the primary event in carbon dioxide fixation, as well as the oxidative fragmentation of the pentose substrate in the photorespiration process. Both reactions occur simultaneously and in competition at the same active site. This Nelsonia canescens (Blue pussyleaf) protein is Ribulose bisphosphate carboxylase large chain.